The chain runs to 231 residues: MAKRIGLFLEKVGHTAIFDNEGKRIPVTLLHLRDSFIISTKTKDINGYNAVVLGVESSVNIKKPQLKILEKSNITAKCRIFESRVDNLDGIVKGAKISITHFVENQYIDVTGYSLGKGFAGVMKRHNFKGLKASHGVSIAHRSQGSTGQCQDPGRVYKGKKMAGHLGSSKVTVQNLKVILVDQERSLLVVKGNNIPGAKGSYVFVKDAVKKSVPKNSFPVCTEDLKLDNIV.

The residue at position 151 (Q151) is an N5-methylglutamine.

It belongs to the universal ribosomal protein uL3 family. Part of the 50S ribosomal subunit. Forms a cluster with proteins L14 and L19. Post-translationally, methylated by PrmB.

Functionally, one of the primary rRNA binding proteins, it binds directly near the 3'-end of the 23S rRNA, where it nucleates assembly of the 50S subunit. In Ehrlichia canis (strain Jake), this protein is Large ribosomal subunit protein uL3.